The chain runs to 118 residues: MPRVKGGTVTRQRRKRVLKLAKGYYGSKRTLFKTAKQQVIKSGQYAYRDRRQKKRDFRKLWITRINAAARMHDLSYSKLMHGLKVAGIDINRKMLSDLAISDEKAFAQLVSQAKEALK.

It belongs to the bacterial ribosomal protein bL20 family.

Its function is as follows. Binds directly to 23S ribosomal RNA and is necessary for the in vitro assembly process of the 50S ribosomal subunit. It is not involved in the protein synthesizing functions of that subunit. The chain is Large ribosomal subunit protein bL20 from Oceanobacillus iheyensis (strain DSM 14371 / CIP 107618 / JCM 11309 / KCTC 3954 / HTE831).